Consider the following 100-residue polypeptide: Urease subunit gamma (100 aa).

This sequence belongs to the urease gamma subunit family. In terms of assembly, heterotrimer of UreA (gamma), UreB (beta) and UreC (alpha) subunits. Three heterotrimers associate to form the active enzyme.

Its subcellular location is the cytoplasm. The catalysed reaction is urea + 2 H2O + H(+) = hydrogencarbonate + 2 NH4(+). The protein operates within nitrogen metabolism; urea degradation; CO(2) and NH(3) from urea (urease route): step 1/1. The chain is Urease subunit gamma from Prochlorococcus marinus (strain MIT 9303).